Here is a 142-residue protein sequence, read N- to C-terminus: Large ribosomal subunit protein uL13 (142 aa).

The protein belongs to the universal ribosomal protein uL13 family. In terms of assembly, part of the 50S ribosomal subunit.

This protein is one of the early assembly proteins of the 50S ribosomal subunit, although it is not seen to bind rRNA by itself. It is important during the early stages of 50S assembly. This is Large ribosomal subunit protein uL13 from Cupriavidus necator (strain ATCC 17699 / DSM 428 / KCTC 22496 / NCIMB 10442 / H16 / Stanier 337) (Ralstonia eutropha).